The sequence spans 400 residues: Large envelope protein (400 aa).

Position 1 is an N-acetylmethionine (methionine 1). The N-myristoyl glycine; by host moiety is linked to residue glycine 2. The tract at residues 2-119 (GAPLSTARRG…PPLRDTHPQA (118 aa)) is pre-S1. The interval 2 to 174 (GAPLSTARRG…FSKTGDPAMN (173 aa)) is pre-S. Residues 2-181 (GAPLSTARRG…AMNMENITSG (180 aa)) are Virion surface; in external conformation-facing. The Intravirion; in internal conformation segment spans residues 2–253 (GAPLSTARRG…PGYRWMCLRR (252 aa)). Proline 4 carries N-linked (GlcNAc...) asparagine glycosylation. The segment at 70–115 (PHGGLLGWSPQAQGILTTSPPDPPPASTNRRSGRKPTPVSPPLRDT) is disordered. Residues 79-88 (PQAQGILTTS) show a composition bias toward polar residues. Positions 120-174 (MQWNSTQFHQALLDPRVRGLYFPAGGSSSETQNPAPTIASLTSSIFSKTGDPAMN) are pre-S2. A helical transmembrane segment spans residues 182 to 202 (LLRPLLVLQAVCFLLTKILTI). At 203-253 (PQSLDSWWTSLNFLGVPPGCPGQNSQSPISNHLPTSCPPTCPGYRWMCLRR) the chain is on the intravirion; in external conformation side. The helical transmembrane segment at 254 to 274 (FIIFLFILLLCLIFLLVLLDY) threads the bilayer. The Virion surface portion of the chain corresponds to 275–348 (QGMLPVCPLL…WASARFSWLS (74 aa)). Asparagine 320 carries an N-linked (GlcNAc...) asparagine; by host glycan. The chain crosses the membrane as a helical span at residues 349-369 (LLVQFVQWCVGLSPTVWLLVI). The Intravirion segment spans residues 370-375 (WMIWYW). The chain crosses the membrane as a helical span at residues 376–398 (GPNLCSILSPFIPLLPIFCYLWA). The Virion surface segment spans residues 399–400 (SI).

The protein belongs to the orthohepadnavirus major surface antigen family. In terms of assembly, in its internal form (Li-HBsAg), interacts with the capsid protein and with the isoform S. Interacts with host chaperone CANX. Associates with host chaperone CANX through its pre-S2 N glycan; this association may be essential for isoform M proper secretion. As to quaternary structure, interacts with isoform L. Interacts with the antigens of satellite virus HDV (HDVAgs); this interaction is required for encapsidation of HDV genomic RNA. Post-translationally, isoform M is N-terminally acetylated by host at a ratio of 90%, and N-glycosylated by host at the pre-S2 region. In terms of processing, myristoylated.

It localises to the virion membrane. Functionally, the large envelope protein exists in two topological conformations, one which is termed 'external' or Le-HBsAg and the other 'internal' or Li-HBsAg. In its external conformation the protein attaches the virus to cell receptors and thereby initiating infection. This interaction determines the species specificity and liver tropism. This attachment induces virion internalization predominantly through caveolin-mediated endocytosis. The large envelope protein also assures fusion between virion membrane and endosomal membrane. In its internal conformation the protein plays a role in virion morphogenesis and mediates the contact with the nucleocapsid like a matrix protein. In terms of biological role, the middle envelope protein plays an important role in the budding of the virion. It is involved in the induction of budding in a nucleocapsid independent way. In this process the majority of envelope proteins bud to form subviral lipoprotein particles of 22 nm of diameter that do not contain a nucleocapsid. The polypeptide is Large envelope protein (Hepatitis B virus genotype H (isolate United States/LAS2523/2002) (HBV-H)).